Reading from the N-terminus, the 243-residue chain is 7-cyano-7-deazaguanine synthase (243 aa).

18-28 (FSGGQDSATCL) provides a ligand contact to ATP. Cys206, Cys221, Cys224, and Cys227 together coordinate Zn(2+).

It belongs to the QueC family. Zn(2+) is required as a cofactor.

It carries out the reaction 7-carboxy-7-deazaguanine + NH4(+) + ATP = 7-cyano-7-deazaguanine + ADP + phosphate + H2O + H(+). Its pathway is purine metabolism; 7-cyano-7-deazaguanine biosynthesis. Functionally, catalyzes the ATP-dependent conversion of 7-carboxy-7-deazaguanine (CDG) to 7-cyano-7-deazaguanine (preQ(0)). In Methylorubrum extorquens (strain PA1) (Methylobacterium extorquens), this protein is 7-cyano-7-deazaguanine synthase.